Reading from the N-terminus, the 256-residue chain is uncharacterized protein (256 aa).

Residues 213–243 (TMSMEAKLEAAKKTLEKFKQEAASKRAKRTK) adopt a coiled-coil conformation. The interval 231-256 (KQEAASKRAKRTKPSGSKTTRSTGRK) is disordered. The span at 244 to 256 (PSGSKTTRSTGRK) shows a compositional bias: polar residues.

This is an uncharacterized protein from Acanthamoeba polyphaga (Amoeba).